The chain runs to 168 residues: Cyclic pyranopterin monophosphate synthase (168 aa).

Substrate contacts are provided by residues Met-75–His-77 and Met-115–Glu-116. The active site involves Asp-130.

This sequence belongs to the MoaC family. Homohexamer; trimer of dimers.

The catalysed reaction is (8S)-3',8-cyclo-7,8-dihydroguanosine 5'-triphosphate = cyclic pyranopterin phosphate + diphosphate. It participates in cofactor biosynthesis; molybdopterin biosynthesis. Its function is as follows. Catalyzes the conversion of (8S)-3',8-cyclo-7,8-dihydroguanosine 5'-triphosphate to cyclic pyranopterin monophosphate (cPMP). This Bacillus licheniformis (strain ATCC 14580 / DSM 13 / JCM 2505 / CCUG 7422 / NBRC 12200 / NCIMB 9375 / NCTC 10341 / NRRL NRS-1264 / Gibson 46) protein is Cyclic pyranopterin monophosphate synthase.